A 364-amino-acid chain; its full sequence is Ribosomal RNA large subunit methyltransferase M (364 aa).

S-adenosyl-L-methionine is bound by residues Ser198, 231-234 (APGG), Asp250, Asp270, and Asp286. Lys315 (proton acceptor) is an active-site residue.

The protein belongs to the class I-like SAM-binding methyltransferase superfamily. RNA methyltransferase RlmE family. RlmM subfamily. Monomer.

Its subcellular location is the cytoplasm. It catalyses the reaction cytidine(2498) in 23S rRNA + S-adenosyl-L-methionine = 2'-O-methylcytidine(2498) in 23S rRNA + S-adenosyl-L-homocysteine + H(+). In terms of biological role, catalyzes the 2'-O-methylation at nucleotide C2498 in 23S rRNA. This Azoarcus sp. (strain BH72) protein is Ribosomal RNA large subunit methyltransferase M.